A 585-amino-acid chain; its full sequence is Arginine--tRNA ligase (585 aa).

Positions 130 to 140 (ANPTGPMHVGH) match the 'HIGH' region motif.

It belongs to the class-I aminoacyl-tRNA synthetase family. As to quaternary structure, monomer.

The protein resides in the cytoplasm. The catalysed reaction is tRNA(Arg) + L-arginine + ATP = L-arginyl-tRNA(Arg) + AMP + diphosphate. The protein is Arginine--tRNA ligase of Methylorubrum extorquens (strain PA1) (Methylobacterium extorquens).